The chain runs to 154 residues: Protein X (154 aa).

The segment at 68-117 (PCALRFTSARCMETTVNAPRNLPKVLHKRTLGLSTMSTTGIETYFKDCVF) is mitochondrial targeting sequence.

It belongs to the orthohepadnavirus protein X family. May form homodimer. May interact with host CEBPA, CFLAR, CREB1, DDB1, E4F1, HBXIP, HSPD1/HSP60, NFKBIA, POLR2E and SMAD4. Interacts with host SMC5-SMC6 complex and induces its degradation. Interacts with host TRPC4AP; leading to prevent ubiquitination of TRPC4AP. Interacts with host PLSCR1; this interaction promotes ubiquitination and degradation of HBx and impairs HBx-mediated cell proliferation. In terms of processing, a fraction may be phosphorylated in insect cells and HepG2 cells, a human hepatoblastoma cell line. Phosphorylated in vitro by host protein kinase C or mitogen-activated protein kinase. N-acetylated in insect cells.

The protein localises to the host cytoplasm. Its subcellular location is the host nucleus. It is found in the host mitochondrion. Its function is as follows. Multifunctional protein that plays a role in silencing host antiviral defenses and promoting viral transcription. Does not seem to be essential for HBV infection. May be directly involved in development of cirrhosis and liver cancer (hepatocellular carcinoma). Most of cytosolic activities involve modulation of cytosolic calcium. The effect on apoptosis is controversial depending on the cell types in which the studies have been conducted. May induce apoptosis by localizing in mitochondria and causing loss of mitochondrial membrane potential. May also modulate apoptosis by binding host CFLAR, a key regulator of the death-inducing signaling complex (DISC). Promotes viral transcription by using the host E3 ubiquitin ligase DDB1 to target the SMC5-SMC6 complex to proteasomal degradation. This host complex would otherwise bind to viral episomal DNA, and prevents its transcription. Moderately stimulates transcription of many different viral and cellular transcription elements. Promoters and enhancers stimulated by HBx contain DNA binding sites for NF-kappa-B, AP-1, AP-2, c-EBP, ATF/CREB, or the calcium-activated factor NF-AT. The polypeptide is Protein X (Orangutan hepatitis B virus (isolate Somad) (HBVoru)).